Reading from the N-terminus, the 305-residue chain is Ribosomal RNA small subunit methyltransferase H (305 aa).

S-adenosyl-L-methionine-binding positions include 47–49, Asp66, Phe93, Asp108, and Gln115; that span reads GGH. The interval 279–305 is disordered; the sequence is ADSNEKLNNPRSRSAKLRLAKKRNPNE. Positions 291-305 are enriched in basic residues; that stretch reads RSAKLRLAKKRNPNE.

The protein belongs to the methyltransferase superfamily. RsmH family.

Its subcellular location is the cytoplasm. The catalysed reaction is cytidine(1402) in 16S rRNA + S-adenosyl-L-methionine = N(4)-methylcytidine(1402) in 16S rRNA + S-adenosyl-L-homocysteine + H(+). Specifically methylates the N4 position of cytidine in position 1402 (C1402) of 16S rRNA. The chain is Ribosomal RNA small subunit methyltransferase H from Prochlorococcus marinus (strain SARG / CCMP1375 / SS120).